The sequence spans 465 residues: uncharacterized protein (465 aa).

A compositionally biased stretch (basic and acidic residues) spans 1–15 (MEKNYIFENSIYKDE). 2 disordered regions span residues 1-31 (MEKN…NNSS) and 288-320 (QLEK…EQLP).

This is an uncharacterized protein from Dictyostelium discoideum (Social amoeba).